The sequence spans 266 residues: Undecaprenyl-diphosphatase (266 aa).

7 helical membrane-spanning segments follow: residues 39-59 (PGSS…VWYF), 86-106 (SIFI…LFVP), 112-132 (VLRS…FMYL), 153-173 (LIGF…GITI), 189-209 (FSFL…FIFS), 216-236 (IGFL…LLAI), and 246-266 (NGLK…LLNL).

The protein belongs to the UppP family.

The protein localises to the cell inner membrane. It catalyses the reaction di-trans,octa-cis-undecaprenyl diphosphate + H2O = di-trans,octa-cis-undecaprenyl phosphate + phosphate + H(+). Functionally, catalyzes the dephosphorylation of undecaprenyl diphosphate (UPP). Confers resistance to bacitracin. In Prochlorococcus marinus (strain MIT 9215), this protein is Undecaprenyl-diphosphatase.